Reading from the N-terminus, the 276-residue chain is Putative pyruvate, phosphate dikinase regulatory protein (276 aa).

Position 151–158 (151–158) interacts with ADP; it reads GISRTSKT.

It belongs to the pyruvate, phosphate/water dikinase regulatory protein family. PDRP subfamily.

It carries out the reaction N(tele)-phospho-L-histidyl/L-threonyl-[pyruvate, phosphate dikinase] + ADP = N(tele)-phospho-L-histidyl/O-phospho-L-threonyl-[pyruvate, phosphate dikinase] + AMP + H(+). The catalysed reaction is N(tele)-phospho-L-histidyl/O-phospho-L-threonyl-[pyruvate, phosphate dikinase] + phosphate + H(+) = N(tele)-phospho-L-histidyl/L-threonyl-[pyruvate, phosphate dikinase] + diphosphate. Functionally, bifunctional serine/threonine kinase and phosphorylase involved in the regulation of the pyruvate, phosphate dikinase (PPDK) by catalyzing its phosphorylation/dephosphorylation. The sequence is that of Putative pyruvate, phosphate dikinase regulatory protein from Streptococcus agalactiae serotype Ia (strain ATCC 27591 / A909 / CDC SS700).